The primary structure comprises 127 residues: Phosphoribosyl-AMP cyclohydrolase (127 aa).

D96 serves as a coordination point for Mg(2+). C97 contributes to the Zn(2+) binding site. Residues D98 and D100 each coordinate Mg(2+). Zn(2+) is bound by residues C113 and C120.

This sequence belongs to the PRA-CH family. As to quaternary structure, homodimer. It depends on Mg(2+) as a cofactor. The cofactor is Zn(2+).

It is found in the cytoplasm. The catalysed reaction is 1-(5-phospho-beta-D-ribosyl)-5'-AMP + H2O = 1-(5-phospho-beta-D-ribosyl)-5-[(5-phospho-beta-D-ribosylamino)methylideneamino]imidazole-4-carboxamide. It participates in amino-acid biosynthesis; L-histidine biosynthesis; L-histidine from 5-phospho-alpha-D-ribose 1-diphosphate: step 3/9. Functionally, catalyzes the hydrolysis of the adenine ring of phosphoribosyl-AMP. The polypeptide is Phosphoribosyl-AMP cyclohydrolase (Corynebacterium jeikeium (strain K411)).